We begin with the raw amino-acid sequence, 68 residues long: Amphipathic peptide OcyC1 (68 aa).

An N-terminal signal peptide occupies residues 1 to 23; the sequence is MKAQLCILLIALVLFQTFSQSDA. Phenylalanine 36 is modified (phenylalanine amide). The propeptide occupies 38 to 68; the sequence is RRGLNDLDDLDELFDGEISQADVDFLNELMR.

Belongs to the non-disulfide-bridged peptide (NDBP) superfamily. Short antimicrobial peptide (group 4) family. Expressed by the venom gland.

It is found in the secreted. The protein localises to the target cell membrane. In terms of biological role, antimicrobial peptide. Inhibits the growth of Gram-positive and Gram-negative bacteria. Shows antifungal activity with MIC values ranging from 12.5 to 25 uM. Also shows an inhibitory activity on C.albicans biofilms at high concentrations. Shows low cytotoxic activity and has weak hemolytic activity. The chain is Amphipathic peptide OcyC1 from Opisthacanthus cayaporum (South American scorpion).